The primary structure comprises 834 residues: Enhancer of filamentation 1 (834 aa).

The SH3 domain occupies 3-65 (ARNLMARALY…PGNRVKLLIG (63 aa)). A phosphotyrosine mark is found at Tyr-92, Tyr-164, Tyr-166, Tyr-177, Tyr-189, Tyr-214, and Tyr-223. Position 296 is a phosphoserine (Ser-296). At Tyr-317 the chain carries Phosphotyrosine. Disordered stretches follow at residues 328-402 (PPAE…DKRL) and 584-624 (SQMP…SERS). A compositionally biased stretch (basic and acidic residues) spans 332 to 344 (TSEKANPEERDGV). A Caspase cleavage related site motif is present at residues 360-363 (DVVD). Low complexity predominate over residues 368–397 (LSFSSTGSTRSNMSTSSTTSKESSVSASPS). Ser-369 is subject to Phosphoserine. Residues 710 to 760 (FYYDQCETHYISLLNAIDALFSCVSSAQPPRIFVAHSKFVILSAHKLVFIG) are divergent helix-loop-helix motif. Positions 710–834 (FYYDQCETHY…KRSLLEMATF (125 aa)) are required for interaction with PLK1. Position 780 is a phosphoserine (Ser-780). A Phosphothreonine modification is found at Thr-804.

This sequence belongs to the CAS family. In terms of assembly, homodimer. Forms heterodimers with BCAR1/p130cas. Forms complexes with PTK2B/RAFTK, adapter protein CRKL and LYN kinase. Part of a complex composed of NEDD9, AURKA and CTTN; within the complex NEDD9 acts as a scaffold protein and is required for complex formation. Part of a ternary complex composed of SMAD3, ITCH/AIP4 and NEDD9/HEF1; within the complex NEDD9/HEF1 interacts (via N-terminus) with ITCH/AIP4; the complex mediates ubiquitination and proteasomal degradation of NEDD9/HEF1. Interacts with ID2. Interacts with CTTN (via N-terminus). Interacts with MICAL. Interacts with TXNL4/DIM1. Interacts with BCAR3 (via Ras-GEF domain). Interacts with SH2D3C isoform 1 and isoform 2. Interacts with BCAR3. Interacts with ECT2. Interacts with PTPN11/SHP-2 (via SH2 domains); the interaction is enhanced when NEDD9/CAS-L is tyrosine phosphorylated. Interacts (via C-terminus) with PLK1 (via polo box domain). Interacts with NKX2-5. Interacts with SMAD3; the interaction is inhibited by oxidation of NEDD9. Interacts with ABL1; interaction is induced by CXCL12-mediated phosphorylation of NEDD/HEF1. Interacts (via SH3 domain) with PTK2/FAK. Interacts with FYN; in the presence of PTK2. Interacts with INPPL1/SHIP2. Polyubiquitinated by ITCH/AIP4, leading to proteasomal degradation. Post-translationally, PTK2/FAK1 phosphorylates the protein at the YDYVHL motif (conserved among all cas proteins) following integrin stimulation. The SRC family kinases (FYN, SRC, LCK and CRK) are recruited to the phosphorylated sites and can phosphorylate other tyrosine residues. Ligation of either integrin beta-1 or B-cell antigen receptor on tonsillar B-cells and B-cell lines promotes tyrosine phosphorylation and both integrin and BCR-mediated tyrosine phosphorylation requires an intact actin network. Phosphorylation is required to recruit NEDD9 to T-cell receptor microclusters at the periphery of newly formed immunological synapses. In fibroblasts transformation with oncogene v-ABL results in an increase in tyrosine phosphorylation. Transiently phosphorylated following CD3 cross-linking and this phosphorylated form binds to CRKL and C3G. A mutant lacking the SH3 domain is phosphorylated upon CD3 cross-linking but not upon integrin beta-1 cross-linking. Tyrosine phosphorylation occurs upon stimulation of the G-protein coupled C1a calcitonin receptor. Calcitonin-stimulated tyrosine phosphorylation is mediated by calcium- and protein kinase C-dependent mechanisms and requires the integrity of the actin cytoskeleton. Phosphorylation at Ser-369 induces proteasomal degradation. Phosphorylated by LYN. Phosphorylation at Ser-780 by CSNK1D or CSNK1E, or phosphorylation of Thr-804 by CSNK1E enhances the interaction of NEDD9 with PLK1.

It localises to the cytoplasm. Its subcellular location is the cell cortex. It is found in the nucleus. The protein localises to the golgi apparatus. The protein resides in the cell projection. It localises to the lamellipodium. Its subcellular location is the cell junction. It is found in the focal adhesion. The protein localises to the cytoskeleton. The protein resides in the spindle pole. It localises to the cilium. Its subcellular location is the cilium basal body. It is found in the basolateral cell membrane. In terms of biological role, negatively regulates embryonic fibroblast migration. May play an important role in integrin beta-1 or B cell antigen receptor (BCR) mediated signaling in B- and T-cells. Integrin beta-1 stimulation leads to recruitment of various proteins including CRKl and SHPTP2 to the tyrosine phosphorylated form. Promotes adhesion and migration of lymphocytes; as a result required for the correct migration of lymphocytes to the spleen and other secondary lymphoid organs. Plays a role in the organization of T-cell F-actin cortical cytoskeleton and the centralization of T-cell receptor microclusters at the immunological synapse. Negatively regulates cilia outgrowth in polarized cysts. Modulates cilia disassembly via activation of AURKA-mediated phosphorylation of HDAC6 and subsequent deacetylation of alpha-tubulin. In conjunction with NKX2-5, positively regulates transcription of genes such as COL3A1 and MMP2, resulting in increased pulmonary endothelial fibrosis in response to hypoxia. Positively regulates RANKL-induced osteoclastogenesis. Required for the maintenance of hippocampal dendritic spines in the dentate gyrus and CA1 regions, thereby involved in spatial learning and memory. In Canis lupus familiaris (Dog), this protein is Enhancer of filamentation 1.